We begin with the raw amino-acid sequence, 357 residues long: Peptide chain release factor 1 (357 aa).

Q233 is modified (N5-methylglutamine).

Belongs to the prokaryotic/mitochondrial release factor family. Post-translationally, methylated by PrmC. Methylation increases the termination efficiency of RF1.

The protein localises to the cytoplasm. Peptide chain release factor 1 directs the termination of translation in response to the peptide chain termination codons UAG and UAA. The polypeptide is Peptide chain release factor 1 (Flavobacterium psychrophilum (strain ATCC 49511 / DSM 21280 / CIP 103535 / JIP02/86)).